The primary structure comprises 73 residues: Translation initiation factor IF-1 (73 aa).

An S1-like domain is found at 1–72; the sequence is MAKQDVIEME…TKGRITYRLR (72 aa).

Belongs to the IF-1 family. In terms of assembly, component of the 30S ribosomal translation pre-initiation complex which assembles on the 30S ribosome in the order IF-2 and IF-3, IF-1 and N-formylmethionyl-tRNA(fMet); mRNA recruitment can occur at any time during PIC assembly.

The protein localises to the cytoplasm. One of the essential components for the initiation of protein synthesis. Stabilizes the binding of IF-2 and IF-3 on the 30S subunit to which N-formylmethionyl-tRNA(fMet) subsequently binds. Helps modulate mRNA selection, yielding the 30S pre-initiation complex (PIC). Upon addition of the 50S ribosomal subunit IF-1, IF-2 and IF-3 are released leaving the mature 70S translation initiation complex. In Gloeobacter violaceus (strain ATCC 29082 / PCC 7421), this protein is Translation initiation factor IF-1.